A 692-amino-acid chain; its full sequence is Elongation factor G (692 aa).

The tr-type G domain occupies 8–282 (ENTRNIGIMA…GVVDYLPSPV (275 aa)). GTP is bound by residues 17–24 (AHIDAGKT), 81–85 (DTPGH), and 135–138 (NKMD).

The protein belongs to the TRAFAC class translation factor GTPase superfamily. Classic translation factor GTPase family. EF-G/EF-2 subfamily.

The protein resides in the cytoplasm. Its function is as follows. Catalyzes the GTP-dependent ribosomal translocation step during translation elongation. During this step, the ribosome changes from the pre-translocational (PRE) to the post-translocational (POST) state as the newly formed A-site-bound peptidyl-tRNA and P-site-bound deacylated tRNA move to the P and E sites, respectively. Catalyzes the coordinated movement of the two tRNA molecules, the mRNA and conformational changes in the ribosome. This Anoxybacillus flavithermus (strain DSM 21510 / WK1) protein is Elongation factor G.